The following is a 119-amino-acid chain: 5-hydroxyisourate hydrolase (119 aa).

Residues histidine 8, arginine 47, and tyrosine 116 each coordinate substrate.

It belongs to the transthyretin family. 5-hydroxyisourate hydrolase subfamily. Homotetramer.

The catalysed reaction is 5-hydroxyisourate + H2O = 5-hydroxy-2-oxo-4-ureido-2,5-dihydro-1H-imidazole-5-carboxylate + H(+). The protein operates within purine metabolism; urate degradation; (S)-allantoin from urate: step 2/3. Its function is as follows. Catalyzes the hydrolysis of 5-hydroxyisourate (HIU) to 2-oxo-4-hydroxy-4-carboxy-5-ureidoimidazoline (OHCU). This Halalkalibacterium halodurans (strain ATCC BAA-125 / DSM 18197 / FERM 7344 / JCM 9153 / C-125) (Bacillus halodurans) protein is 5-hydroxyisourate hydrolase.